Consider the following 408-residue polypeptide: Elongation factor Tu, chloroplastic (408 aa).

A tr-type G domain is found at 10–213 (KPHVNIGTIG…KVDEYIPTPE (204 aa)). The tract at residues 19–26 (GHVDHGKT) is G1. 19-26 (GHVDHGKT) provides a ligand contact to GTP. Mg(2+) is bound at residue threonine 26. The interval 59–63 (GITIN) is G2. Positions 80-83 (DCPG) are G3. GTP contacts are provided by residues 80-84 (DCPGH) and 135-138 (NKAD). The tract at residues 135–138 (NKAD) is G4. The G5 stretch occupies residues 173–175 (SAL).

It belongs to the TRAFAC class translation factor GTPase superfamily. Classic translation factor GTPase family. EF-Tu/EF-1A subfamily.

Its subcellular location is the plastid. The protein resides in the chloroplast. It carries out the reaction GTP + H2O = GDP + phosphate + H(+). In terms of biological role, GTP hydrolase that promotes the GTP-dependent binding of aminoacyl-tRNA to the A-site of ribosomes during protein biosynthesis. The protein is Elongation factor Tu, chloroplastic (tufA) of Guillardia theta (Cryptophyte).